We begin with the raw amino-acid sequence, 123 residues long: UPF0102 protein CLD_2200 (123 aa).

It belongs to the UPF0102 family.

This is UPF0102 protein CLD_2200 from Clostridium botulinum (strain Okra / Type B1).